Reading from the N-terminus, the 353-residue chain is Phosphoribosylformylglycinamidine cyclo-ligase (353 aa).

This sequence belongs to the AIR synthase family.

Its subcellular location is the cytoplasm. It carries out the reaction 2-formamido-N(1)-(5-O-phospho-beta-D-ribosyl)acetamidine + ATP = 5-amino-1-(5-phospho-beta-D-ribosyl)imidazole + ADP + phosphate + H(+). It functions in the pathway purine metabolism; IMP biosynthesis via de novo pathway; 5-amino-1-(5-phospho-D-ribosyl)imidazole from N(2)-formyl-N(1)-(5-phospho-D-ribosyl)glycinamide: step 2/2. The protein is Phosphoribosylformylglycinamidine cyclo-ligase of Magnetococcus marinus (strain ATCC BAA-1437 / JCM 17883 / MC-1).